The sequence spans 347 residues: 8-amino-8-demethylriboflavin N,N-dimethyltransferase (347 aa).

S-adenosyl-L-methionine contacts are provided by residues Asp209 and 235-237 (GDF).

This sequence belongs to the class I-like SAM-binding methyltransferase superfamily. Cation-independent O-methyltransferase family. As to quaternary structure, homodimer.

The catalysed reaction is 8-amino-8-demethylriboflavin + 2 S-adenosyl-L-methionine = roseoflavin + 2 S-adenosyl-L-homocysteine + 2 H(+). Its pathway is antibiotic biosynthesis. Functionally, catalyzes the S-adenosyl methionine-dependent conversion of 8-amino-8-demethyl-D-riboflavin (AF) into 8-methylamino-8-demethyl-D-riboflavin (MAF) and roseoflavin (RoF), the last two steps in the biosynthesis of the antibiotic roseoflavin. This is 8-amino-8-demethylriboflavin N,N-dimethyltransferase from Streptomyces davaonensis (strain DSM 101723 / JCM 4913 / KCC S-0913 / 768).